The chain runs to 349 residues: MLHRIELPQKIVVGSGAIDALREVLEEFAGRNSSIAVISGPNVWRLYGERFRSIVEGFVEYSFFEARNASVEYAEKLLEDVKAYSPSLVVGFGGGKSIDLAKYVAYRLGVRMISVPTSPSHDGIASPFTSLKGLDKPHSVRTVTPAAIIADIDIIASAPIRLIRAGAGDLIAKLTAIRDWRLAHKLKGEYYGEYAAKLALLSAKHVIEYASQIGRGVKEAVRVLVEGLVSSGVAMCIAGSTRPASGSEHLFAHALDLIAPGKALHGEEVALGTIMMMYLHGGDWRHVRRTIRRLGLPVTAKELGLSDEVIVKALTMAHRIRPERYTILGESGLTWEAAERLARVTGVIG.

NAD(+) contacts are provided by residues 95-99 (GKSID) and 117-120 (TSPS). Aspartate 122 serves as a coordination point for substrate. Serine 126 lines the NAD(+) pocket. Substrate is bound at residue aspartate 169. 2 residues coordinate Zn(2+): aspartate 169 and histidine 249. Histidine 253 contributes to the substrate binding site. Zn(2+) is bound at residue histidine 265.

The protein belongs to the glycerol-1-phosphate dehydrogenase family. In terms of assembly, homodimer. It depends on Zn(2+) as a cofactor.

The protein resides in the cytoplasm. The catalysed reaction is sn-glycerol 1-phosphate + NAD(+) = dihydroxyacetone phosphate + NADH + H(+). It carries out the reaction sn-glycerol 1-phosphate + NADP(+) = dihydroxyacetone phosphate + NADPH + H(+). It participates in membrane lipid metabolism; glycerophospholipid metabolism. Functionally, catalyzes the NAD(P)H-dependent reduction of dihydroxyacetonephosphate (DHAP or glycerone phosphate) to glycerol 1-phosphate (G1P). The G1P thus generated is used as the glycerophosphate backbone of phospholipids in the cellular membranes of Archaea. In Hyperthermus butylicus (strain DSM 5456 / JCM 9403 / PLM1-5), this protein is Glycerol-1-phosphate dehydrogenase [NAD(P)+].